Reading from the N-terminus, the 396-residue chain is Elongation factor Tu-B (396 aa).

Positions 10 to 206 (KLHVNVGTIG…ALDTFIPDPT (197 aa)) constitute a tr-type G domain. Residues 19–26 (GHVDHGKT) are G1. 19–26 (GHVDHGKT) is a binding site for GTP. Threonine 26 is a Mg(2+) binding site. A G2 region spans residues 60–64 (GITIS). Residues 81–84 (DCPG) form a G3 region. Residues 81-85 (DCPGH) and 136-139 (NKAD) each bind GTP. The G4 stretch occupies residues 136–139 (NKAD). The segment at 174-176 (SAR) is G5.

This sequence belongs to the TRAFAC class translation factor GTPase superfamily. Classic translation factor GTPase family. EF-Tu/EF-1A subfamily. In terms of assembly, monomer.

It localises to the cytoplasm. It catalyses the reaction GTP + H2O = GDP + phosphate + H(+). Its function is as follows. GTP hydrolase that promotes the GTP-dependent binding of aminoacyl-tRNA to the A-site of ribosomes during protein biosynthesis. The chain is Elongation factor Tu-B from Xanthomonas campestris pv. campestris (strain ATCC 33913 / DSM 3586 / NCPPB 528 / LMG 568 / P 25).